Here is a 37-residue protein sequence, read N- to C-terminus: Large ribosomal subunit protein bL36c (37 aa).

It belongs to the bacterial ribosomal protein bL36 family.

The protein resides in the plastid. The protein localises to the chloroplast. The polypeptide is Large ribosomal subunit protein bL36c (Piper cenocladum (Ant piper)).